The following is a 192-amino-acid chain: Dihydrofolate reductase (192 aa).

Residues 5-191 (NVAIIVAALK…FTYNYTLWTR (187 aa)) form the DHFR domain. Residues Ala-11 and 18 to 24 (GIGYKGK) contribute to the NADP(+) site. 32-37 (EIRYFK) serves as a coordination point for substrate. 56–58 (RKT) is a binding site for NADP(+). Arg-72 serves as a coordination point for substrate. 78-80 (SRS) provides a ligand contact to NADP(+). Substrate is bound by residues Ile-112 and Tyr-118. NADP(+) is bound at residue 113–120 (GGAEIYNE).

The protein belongs to the dihydrofolate reductase family.

The catalysed reaction is (6S)-5,6,7,8-tetrahydrofolate + NADP(+) = 7,8-dihydrofolate + NADPH + H(+). Its pathway is cofactor biosynthesis; tetrahydrofolate biosynthesis; 5,6,7,8-tetrahydrofolate from 7,8-dihydrofolate: step 1/1. Its function is as follows. Key enzyme in folate metabolism. Catalyzes an essential reaction for de novo glycine and purine synthesis, and for DNA precursor synthesis. The polypeptide is Dihydrofolate reductase (DFR1) (Candida albicans (Yeast)).